The sequence spans 74 residues: DNA-directed RNA polymerase subunit omega (74 aa).

This sequence belongs to the RNA polymerase subunit omega family. In terms of assembly, the RNAP catalytic core consists of 2 alpha, 1 beta, 1 beta' and 1 omega subunit. When a sigma factor is associated with the core the holoenzyme is formed, which can initiate transcription.

It carries out the reaction RNA(n) + a ribonucleoside 5'-triphosphate = RNA(n+1) + diphosphate. Functionally, promotes RNA polymerase assembly. Latches the N- and C-terminal regions of the beta' subunit thereby facilitating its interaction with the beta and alpha subunits. This chain is DNA-directed RNA polymerase subunit omega, found in Marinomonas sp. (strain MWYL1).